Here is a 390-residue protein sequence, read N- to C-terminus: GTPase Obg (390 aa).

The Obg domain maps to 1-159; the sequence is MKFVDEASVK…RELRLELLLL (159 aa). The 174-residue stretch at 160–333 folds into the OBG-type G domain; it reads ADVGMLGLPN…LCFKLGEFME (174 aa). Residues 166-173, 191-195, 213-216, 283-286, and 314-316 contribute to the GTP site; these read GLPNAGKS, FTTLI, DIPG, NKVD, and SAV. Mg(2+) is bound by residues S173 and T193.

Belongs to the TRAFAC class OBG-HflX-like GTPase superfamily. OBG GTPase family. In terms of assembly, monomer. The cofactor is Mg(2+).

The protein localises to the cytoplasm. Functionally, an essential GTPase which binds GTP, GDP and possibly (p)ppGpp with moderate affinity, with high nucleotide exchange rates and a fairly low GTP hydrolysis rate. Plays a role in control of the cell cycle, stress response, ribosome biogenesis and in those bacteria that undergo differentiation, in morphogenesis control. This Vibrio atlanticus (strain LGP32) (Vibrio splendidus (strain Mel32)) protein is GTPase Obg.